Here is a 538-residue protein sequence, read N- to C-terminus: Putative cysteine ligase BshC (538 aa).

Residues Lys460–Leu484 are a coiled coil.

It belongs to the BshC family.

Its function is as follows. Involved in bacillithiol (BSH) biosynthesis. May catalyze the last step of the pathway, the addition of cysteine to glucosamine malate (GlcN-Mal) to generate BSH. The polypeptide is Putative cysteine ligase BshC (Bacillus thuringiensis (strain Al Hakam)).